The sequence spans 353 residues: Mitochondrial ubiquitin ligase activator of nfkb 1 (353 aa).

At methionine 1–serine 8 the chain is on the cytoplasmic side. The helical transmembrane segment at valine 9–tyrosine 29 threads the bilayer. The Mitochondrial intermembrane segment spans residues arginine 30 to arginine 239. Residues tryptophan 240 to leucine 260 form a helical membrane-spanning segment. Over arginine 261 to serine 353 the chain is Cytoplasmic. The segment at cysteine 303–arginine 341 adopts an RING-type zinc-finger fold.

As to quaternary structure, homooligomer.

It is found in the mitochondrion outer membrane. It catalyses the reaction S-ubiquitinyl-[E2 ubiquitin-conjugating enzyme]-L-cysteine + [acceptor protein]-L-lysine = [E2 ubiquitin-conjugating enzyme]-L-cysteine + N(6)-ubiquitinyl-[acceptor protein]-L-lysine.. It participates in protein modification; protein ubiquitination. In terms of biological role, E3 ubiquitin-protein ligase that plays a role in the control of mitochondrial morphology. Promotes mitochondrial fragmentation and influences mitochondrial localization. Inhibits cell growth. E3 ubiquitin ligases accept ubiquitin from an E2 ubiquitin-conjugating enzyme in the form of a thioester and then directly transfer the ubiquitin to targeted substrates. In Xenopus laevis (African clawed frog), this protein is Mitochondrial ubiquitin ligase activator of nfkb 1 (mul1).